A 1228-amino-acid chain; its full sequence is DNA-directed RNA polymerase subunit beta'' (1228 aa).

Residues Cys222, Cys296, Cys303, and Cys306 each contribute to the Zn(2+) site.

This sequence belongs to the RNA polymerase beta' chain family. RpoC2 subfamily. In plastids the minimal PEP RNA polymerase catalytic core is composed of four subunits: alpha, beta, beta', and beta''. When a (nuclear-encoded) sigma factor is associated with the core the holoenzyme is formed, which can initiate transcription. The cofactor is Zn(2+).

Its subcellular location is the plastid. The protein localises to the chloroplast. The enzyme catalyses RNA(n) + a ribonucleoside 5'-triphosphate = RNA(n+1) + diphosphate. Functionally, DNA-dependent RNA polymerase catalyzes the transcription of DNA into RNA using the four ribonucleoside triphosphates as substrates. In Gracilaria tenuistipitata var. liui (Red alga), this protein is DNA-directed RNA polymerase subunit beta''.